Reading from the N-terminus, the 137-residue chain is ATP synthase epsilon chain (137 aa).

Belongs to the ATPase epsilon chain family. In terms of assembly, F-type ATPases have 2 components, CF(1) - the catalytic core - and CF(0) - the membrane proton channel. CF(1) has five subunits: alpha(3), beta(3), gamma(1), delta(1), epsilon(1). CF(0) has three main subunits: a, b and c.

It is found in the cellular thylakoid membrane. Produces ATP from ADP in the presence of a proton gradient across the membrane. The sequence is that of ATP synthase epsilon chain from Nostoc punctiforme (strain ATCC 29133 / PCC 73102).